An 880-amino-acid chain; its full sequence is Paramyosin (880 aa).

The segment at 1–34 (MSGSLYRSPSAALYKSPSMSAFGGLPAAFGSMSV) is nonhelical region. A coiled-coil region spans residues 35–859 (ADLGSLTRLE…LIRAKHRHQL (825 aa)). The tract at residues 860 to 880 (LRAKMLQRQKFTFSKMSNRDN) is nonhelical region.

This sequence belongs to the paramyosin family. In terms of assembly, homodimer.

The protein resides in the cytoplasm. It localises to the myofibril. Its function is as follows. Paramyosin is a major structural component of many thick filaments isolated from invertebrate muscles. The chain is Paramyosin from Brugia malayi (Filarial nematode worm).